Here is a 160-residue protein sequence, read N- to C-terminus: Deoxyuridine 5'-triphosphate nucleotidohydrolase (160 aa).

Residues 72–74, asparagine 85, and 89–91 contribute to the substrate site; these read RSG and TID.

Belongs to the dUTPase family. Mg(2+) serves as cofactor.

It catalyses the reaction dUTP + H2O = dUMP + diphosphate + H(+). Its pathway is pyrimidine metabolism; dUMP biosynthesis; dUMP from dCTP (dUTP route): step 2/2. Functionally, this enzyme is involved in nucleotide metabolism: it produces dUMP, the immediate precursor of thymidine nucleotides and it decreases the intracellular concentration of dUTP so that uracil cannot be incorporated into DNA. The chain is Deoxyuridine 5'-triphosphate nucleotidohydrolase from Methylocella silvestris (strain DSM 15510 / CIP 108128 / LMG 27833 / NCIMB 13906 / BL2).